Consider the following 422-residue polypeptide: Glutamyl-tRNA reductase (422 aa).

Residues 49 to 52 (TCNR), Ser-107, 112 to 114 (EPQ), and Gln-118 each bind substrate. Residue Cys-50 is the Nucleophile of the active site. Residue 187–192 (GAGETI) coordinates NADP(+).

It belongs to the glutamyl-tRNA reductase family. Homodimer.

The enzyme catalyses (S)-4-amino-5-oxopentanoate + tRNA(Glu) + NADP(+) = L-glutamyl-tRNA(Glu) + NADPH + H(+). It functions in the pathway porphyrin-containing compound metabolism; protoporphyrin-IX biosynthesis; 5-aminolevulinate from L-glutamyl-tRNA(Glu): step 1/2. Catalyzes the NADPH-dependent reduction of glutamyl-tRNA(Glu) to glutamate 1-semialdehyde (GSA). This chain is Glutamyl-tRNA reductase, found in Pseudomonas paraeruginosa (strain DSM 24068 / PA7) (Pseudomonas aeruginosa (strain PA7)).